Reading from the N-terminus, the 488-residue chain is MSAIQSPAPKPLQPTYPAASPASTNAYMKPGLIGSPAVSNHTEPNNGNNETAEPQGPNQRIDLGAMIEELTSLLGKESWTKYAQIISLFILGKLSRKELSNELELVFSPSAASLEKSNTNHHHSLVRLHNQLLLGIFANSLRENPLGRNGNESSWGFGNGSNNPNNKLKRINKHNSQIEVYKKIVMSLPLNDRNRLKMITKEAGKRGFIFCSVFQARLNNIPKIPIVTNPESLKRVKSNNLKTPLEWSQDIMNGFNVPLASESHSLPDTDSFYLRMVGIAREHGLVGTVDARCVELISLALDQYLKNIIEFTIDTVRYRRKKYSDYYDLNESGLYKSVSEMAADKRDAKIKQLDDDKNEDECADEAKSINNGNNSSKDDIGDISMSSITKAGEAVNEELHENRTISLTNEDIYDSLSIFPNLVEPSGSYYALTNLGLVNDDELVDMKSNIDDLPDFLNEKPTFTPLDERNVGTRHELNWLIKGILTED.

Disordered stretches follow at residues 1-58 and 352-383; these read MSAI…QGPN and QLDD…IGDI. The span at 37–58 shows a compositional bias: polar residues; it reads AVSNHTEPNNGNNETAEPQGPN.

As to quaternary structure, component of the 1.8 MDa SAGA (Spt-Ada-Gcn5 acetyltransferase) complex, which is composed of 19 subunits TRA1, SPT7, TAF5, NGG1/ADA3, SGF73, SPT20/ADA5, SPT8, TAF12, TAF6, HFI1/ADA1, UBP8, GCN5, ADA2, SPT3, SGF29, TAF10, TAF9, SGF11 and SUS1. The SAGA complex is composed of 4 modules, namely the HAT (histone acetyltransferase) module (GCN5, ADA2, NGG1/ADA3 and SGF29), the DUB (deubiquitinating) module (UBP8, SGF11, SGF73 and SUS1), the core or TAF (TBP-associated factor) module (TAF5, TAF6, TAF9, TAF10 and TAF12), and the Tra1 or SPT (Suppressor of Ty) module (TRA1, HFI1/ADA1, SPT3, SPT7, SPT8 and SPT20/ADA5). The Tra1/SPT module binds activators, the core module recruits TBP (TATA-binding protein), the HAT module contains the histone H3 acetyltransferase GCN5, and the DUB module comprises the histone H2B deubiquitinase UBP8. Also identified in an altered form of SAGA, named SALSA (SAGA altered, Spt8 absent) or SLIK (SAGA-like) complex, which contains a C-terminal truncated form of SPT7 and is missing SPT8. However, it has been shown that the SAGA and SAGA-like SALSA/SLIK transcriptional coactivators are structurally and biochemically equivalent. Component of an ADA/GCN5 complex that consists of HFI1/ADA1, ADA2, NGG1/ADA3, SPT20/ADA5 and GCN5 and probably is a subcomplex of SAGA.

The protein resides in the nucleus. Functionally, component of the transcription coactivator SAGA complex. SAGA acts as a general cofactor required for essentially all RNA polymerase II transcription. At the promoters, SAGA is required for transcription pre-initiation complex (PIC) recruitment. It influences RNA polymerase II transcriptional activity through different activities such as TBP interaction (via core/TAF module) and promoter selectivity, interaction with transcription activators (via Tra1/SPT module), and chromatin modification through histone acetylation (via HAT module) and deubiquitination (via DUB module). SAGA preferentially acetylates histones H3 (to form H3K9ac, H3K14ac, H3K18ac and H3K23ac) and H2B and deubiquitinates histone H2B. SAGA interacts with DNA via upstream activating sequences (UASs). Also identified in a modified version of SAGA named SALSA or SLIK. The cleavage of SPT7 and the absence of the SPT8 subunit in SLIK neither drive any major conformational differences in its structure compared with SAGA, nor significantly affect HAT, DUB, or DNA-binding activities. The protein is SAGA complex subunit HFI1 (HFI1) of Saccharomyces cerevisiae (strain ATCC 204508 / S288c) (Baker's yeast).